A 188-amino-acid chain; its full sequence is Small ribosomal subunit protein uS7 (188 aa).

This sequence belongs to the universal ribosomal protein uS7 family. As to quaternary structure, part of the 30S ribosomal subunit.

Functionally, one of the primary rRNA binding proteins, it binds directly to 16S rRNA where it nucleates assembly of the head domain of the 30S subunit. Is located at the subunit interface close to the decoding center. In Methanococcus maripaludis (strain C6 / ATCC BAA-1332), this protein is Small ribosomal subunit protein uS7.